The chain runs to 562 residues: Probable malate:quinone oxidoreductase (562 aa).

Residues serine 535–leucine 562 are disordered. The span at proline 545 to leucine 562 shows a compositional bias: polar residues.

It belongs to the MQO family. FAD is required as a cofactor.

The enzyme catalyses (S)-malate + a quinone = a quinol + oxaloacetate. It participates in carbohydrate metabolism; tricarboxylic acid cycle; oxaloacetate from (S)-malate (quinone route): step 1/1. In Xylella fastidiosa (strain M23), this protein is Probable malate:quinone oxidoreductase.